The following is a 248-amino-acid chain: Ribosomal RNA small subunit methyltransferase J (248 aa).

Residues Arg98–Asp99, Glu114–Arg115, Ser150–Ser151, and Asp168 each bind S-adenosyl-L-methionine.

This sequence belongs to the methyltransferase superfamily. RsmJ family.

It is found in the cytoplasm. It carries out the reaction guanosine(1516) in 16S rRNA + S-adenosyl-L-methionine = N(2)-methylguanosine(1516) in 16S rRNA + S-adenosyl-L-homocysteine + H(+). Functionally, specifically methylates the guanosine in position 1516 of 16S rRNA. This Shewanella denitrificans (strain OS217 / ATCC BAA-1090 / DSM 15013) protein is Ribosomal RNA small subunit methyltransferase J.